Reading from the N-terminus, the 483-residue chain is Probable zinc metalloprotease PTT_08196 (483 aa).

An N-terminal signal peptide occupies residues 1–18 (MLFRSVILSNALLLPACA). N-linked (GlcNAc...) asparagine glycans are attached at residues N96 and N121. Zn(2+) is bound by residues H167, D187, and E220. N235 carries N-linked (GlcNAc...) asparagine glycosylation. A Zn(2+)-binding site is contributed by D247. Residues N310, N362, N401, N411, and N421 are each glycosylated (N-linked (GlcNAc...) asparagine). Residues 396–483 (PAMPRNVTID…KSPAVYPFPA (88 aa)) form the Fibronectin type-III domain.

The protein belongs to the peptidase M28 family. M28B subfamily. The cofactor is Zn(2+).

The protein resides in the secreted. The polypeptide is Probable zinc metalloprotease PTT_08196 (Pyrenophora teres f. teres (strain 0-1) (Barley net blotch fungus)).